Here is a 538-residue protein sequence, read N- to C-terminus: Putative cysteine ligase BshC (538 aa).

A coiled-coil region spans residues 460 to 484 (KINEQIELLERMLKRNVEKKHEVEL).

This sequence belongs to the BshC family.

Involved in bacillithiol (BSH) biosynthesis. May catalyze the last step of the pathway, the addition of cysteine to glucosamine malate (GlcN-Mal) to generate BSH. This Bacillus cereus (strain AH820) protein is Putative cysteine ligase BshC.